The sequence spans 115 residues: NAD(P)H-quinone oxidoreductase subunit M (115 aa).

It belongs to the complex I NdhM subunit family. In terms of assembly, NDH-1 can be composed of about 15 different subunits; different subcomplexes with different compositions have been identified which probably have different functions.

The protein localises to the cellular thylakoid membrane. The catalysed reaction is a plastoquinone + NADH + (n+1) H(+)(in) = a plastoquinol + NAD(+) + n H(+)(out). It catalyses the reaction a plastoquinone + NADPH + (n+1) H(+)(in) = a plastoquinol + NADP(+) + n H(+)(out). Functionally, NDH-1 shuttles electrons from an unknown electron donor, via FMN and iron-sulfur (Fe-S) centers, to quinones in the respiratory and/or the photosynthetic chain. The immediate electron acceptor for the enzyme in this species is believed to be plastoquinone. Couples the redox reaction to proton translocation, and thus conserves the redox energy in a proton gradient. Cyanobacterial NDH-1 also plays a role in inorganic carbon-concentration. The chain is NAD(P)H-quinone oxidoreductase subunit M from Parasynechococcus marenigrum (strain WH8102).